Here is a 271-residue protein sequence, read N- to C-terminus: Glutamate racemase (271 aa).

Substrate contacts are provided by residues 12-13 and 44-45; these read DS and YG. Catalysis depends on cysteine 75, which acts as the Proton donor/acceptor. 76 to 77 lines the substrate pocket; sequence NS. The active-site Proton donor/acceptor is the cysteine 185. A substrate-binding site is contributed by 186–187; it reads TH.

The protein belongs to the aspartate/glutamate racemases family.

The catalysed reaction is L-glutamate = D-glutamate. It functions in the pathway cell wall biogenesis; peptidoglycan biosynthesis. Functionally, provides the (R)-glutamate required for cell wall biosynthesis. The protein is Glutamate racemase of Mycobacterium bovis (strain ATCC BAA-935 / AF2122/97).